We begin with the raw amino-acid sequence, 156 residues long: Endoribonuclease YbeY (156 aa).

Positions 122, 126, and 132 each coordinate Zn(2+).

The protein belongs to the endoribonuclease YbeY family. Requires Zn(2+) as cofactor.

The protein resides in the cytoplasm. In terms of biological role, single strand-specific metallo-endoribonuclease involved in late-stage 70S ribosome quality control and in maturation of the 3' terminus of the 16S rRNA. This Symbiobacterium thermophilum (strain DSM 24528 / JCM 14929 / IAM 14863 / T) protein is Endoribonuclease YbeY.